Reading from the N-terminus, the 98-residue chain is Large ribosomal subunit protein eL30 (98 aa).

This sequence belongs to the eukaryotic ribosomal protein eL30 family.

The protein is Large ribosomal subunit protein eL30 of Methanosphaera stadtmanae (strain ATCC 43021 / DSM 3091 / JCM 11832 / MCB-3).